The chain runs to 105 residues: Large ribosomal subunit protein bL21 (105 aa).

It belongs to the bacterial ribosomal protein bL21 family. Part of the 50S ribosomal subunit. Contacts protein L20.

Its function is as follows. This protein binds to 23S rRNA in the presence of protein L20. The chain is Large ribosomal subunit protein bL21 from Desulfatibacillum aliphaticivorans.